Reading from the N-terminus, the 240-residue chain is Keratinocyte-associated protein 3 (240 aa).

A run of 4 helical transmembrane segments spans residues 21 to 41, 63 to 83, 95 to 115, and 163 to 183; these read VGLALILVGHVNLLLGAVLHG, VISVGSGLLSVSLGLVALLAS, LLALALVNLLLSAACSLGLLL, and ALALWIPSVFMSAAEAALSGY.

The protein belongs to the TMEM54 family.

The protein localises to the membrane. This chain is Keratinocyte-associated protein 3 (KRTCAP3), found in Bos taurus (Bovine).